The primary structure comprises 293 residues: Cell division protein FtsQ (293 aa).

Residues methionine 1 to glutamine 29 are Cytoplasmic-facing. Residues leucine 30–glycine 52 traverse the membrane as a helical segment. The Periplasmic portion of the chain corresponds to glycine 53–alanine 293. Positions phenylalanine 75–arginine 144 constitute a POTRA domain.

The protein belongs to the FtsQ/DivIB family. FtsQ subfamily.

It localises to the cell inner membrane. Functionally, essential cell division protein. The chain is Cell division protein FtsQ from Hirschia baltica (strain ATCC 49814 / DSM 5838 / IFAM 1418).